The primary structure comprises 804 residues: Endoplasmin (804 aa).

The signal sequence occupies residues 1 to 21 (MRALWVLGLCCVLLTFGSVRA). Residues 42 to 44 (SRT) carry the SRT pseudosubstrate motif motif. Residue Asn-62 is glycosylated (N-linked (GlcNAc...) asparagine). Ser-64 is modified (phosphoserine). A glycan (N-linked (GlcNAc...) asparagine) is linked at Asn-107. ATP is bound by residues Asn-107, Asp-149, and Asn-162. Lys-168 is subject to N6-(2-hydroxyisobutyryl)lysine. Ser-172 carries the post-translational modification Phosphoserine. Phe-199 contributes to the ATP binding site. Residue Asn-217 is glycosylated (N-linked (GlcNAc...) asparagine). Thr-288 carries the phosphothreonine; by CK2 modification. The segment at 288 to 323 (TVEEPMEEEEAAKEEKEDSDDEAAVEEEEEEKKPKT) is disordered. Residues 289–317 (VEEPMEEEEAAKEEKEDSDDEAAVEEEEE) show a composition bias toward acidic residues. Position 306 is a phosphoserine; by CK2 (Ser-306). Ser-403 is modified (phosphoserine). Lys-404 carries the N6-succinyllysine modification. The N-linked (GlcNAc...) asparagine glycan is linked to Asn-445. Ser-447 is subject to Phosphoserine. The residue at position 479 (Lys-479) is an N6-acetyllysine. Asn-481 and Asn-502 each carry an N-linked (GlcNAc...) asparagine glycan. Lys-633 carries the N6-succinyllysine modification. Residues 750 to 804 (DPDAKVEEEPEEEPEETTEDTTEDTEQDDEEEMDAGTDDEEQETVKKSTAEKDEL) form a disordered region. Acidic residues predominate over residues 757–791 (EEPEEEPEETTEDTTEDTEQDDEEEMDAGTDDEEQ). Thr-766, Thr-770, Thr-774, and Thr-786 each carry phosphothreonine; by CK2. The span at 792-804 (ETVKKSTAEKDEL) shows a compositional bias: basic and acidic residues. The short motif at 801-804 (KDEL) is the Prevents secretion from ER element.

This sequence belongs to the heat shock protein 90 family. In terms of assembly, homodimer; disulfide-linked. Component of an EIF2 complex at least composed of CELF1/CUGBP1, CALR, CALR3, EIF2S1, EIF2S2, HSP90B1 and HSPA5. Part of a large chaperone multiprotein complex comprising DNAJB11, HSP90B1, HSPA5, HYOU, PDIA2, PDIA4, PDIA6, PPIB, SDF2L1, UGGT1 and very small amounts of ERP29, but not, or at very low levels, CALR nor CANX. Interacts with AIMP1; regulates its retention in the endoplasmic reticulum. Hyperglycosylated form interacts with OS9; promoting its degradation by the endoplasmic reticulum associated degradation (ERAD). Interacts with CNPY3. This interaction is disrupted in the presence of ATP. Interacts with TLR4 and TLR9, but not with TLR3. Interacts with MZB1 in a calcium-dependent manner. Interacts with METTL23. Interacts with IL1B; the interaction facilitates cargo translocation into the ERGIC. Interacts with EIF2AK3. Post-translationally, phosphorylated by CK2. N-glycosylated cotranslationally at Asn-217 by STT3A-containing OST-A complex: this glycosylation is constitutive. In response to various stress, 5 additional facultative sites (Asn-62, Asn-107, Asn-445, Asn-481 and Asn-502) can be glycosylated post-translationally by STT3B-containing OST-B complex, leading to a hyperglycosylated form that is degraded by the ER-associated degradation (ERAD) pathway. In normal conditions, the OST-A complex together with CCDC134 prevent glycosylation at facultative sites during protein folding, thereby preventing hyperglycosylation. Mechanistically, nascent HSP90B1 is tethered during translation to a specialized CCDC134-containing translocon that forms a microenvironment for its folding, in which STT3A associates with the SRT pseudosubstrate motif, and prevents access to facultative glycosylation sites until folding is completed, rendering its facultative sites inaccessible to the OST-B complex. Detected in heart muscle (at protein level).

It localises to the endoplasmic reticulum lumen. Its subcellular location is the sarcoplasmic reticulum lumen. The protein resides in the melanosome. The enzyme catalyses ATP + H2O = ADP + phosphate + H(+). Functionally, ATP-dependent chaperone involved in the processing of proteins in the endoplasmic reticulum, regulating their transport. Together with MESD, acts as a modulator of the Wnt pathway by promoting the folding of LRP6, a coreceptor of the canonical Wnt pathway. When associated with CNPY3, required for proper folding of Toll-like receptors. Promotes folding and trafficking of TLR4 to the cell surface. May participate in the unfolding of cytosolic leaderless cargos (lacking the secretion signal sequence) such as the interleukin 1/IL-1 to facilitate their translocation into the ERGIC (endoplasmic reticulum-Golgi intermediate compartment) and secretion; the translocation process is mediated by the cargo receptor TMED10. May also function in endoplasmic reticulum associated degradation (ERAD); it is however unclear whether it participates to ERAD or is a target of ERAD. This chain is Endoplasmin (HSP90B1), found in Canis lupus familiaris (Dog).